Reading from the N-terminus, the 431-residue chain is Guanine nucleotide exchange factor rei-2 (431 aa).

The segment covering 1–21 has biased composition (polar residues); sequence MDETATSSEVTETFVSDPTTR. The disordered stretch occupies residues 1–28; the sequence is MDETATSSEVTETFVSDPTTRQFEEDGH. Coiled-coil stretches lie at residues 149–171 and 214–247; these read EVLN…AESL and LEAQ…RISE. The tract at residues 249–298 is disordered; that stretch reads IHEERSTGSLESAVSSDQEDQKSDFKSSESLPGNPPPYAPTAPPPYEDKY. Over residues 255–264 the composition is skewed to polar residues; sequence TGSLESAVSS. Over residues 281 to 293 the composition is skewed to pro residues; that stretch reads GNPPPYAPTAPPP.

It belongs to the SH3BP5 family. As to quaternary structure, interacts with rab-11.1. Binds preferentially to the GDP-bound form of rab-11.1.

In terms of biological role, guanine nucleotide exchange factor for Rab GTPase Rab-11.1. May spatially and temporally regulate the distribution of Rab-11.1 to target membranes during embryogenesis. May play a role in cytokinesis, probably by targeting rab-11.1 to the cleavage furrows. The protein is Guanine nucleotide exchange factor rei-2 of Caenorhabditis elegans.